The following is an 832-amino-acid chain: Mechanosensitive cation channel TMEM63B (832 aa).

Residues 1–40 are Extracellular-facing; sequence MLPFLLATLGTTALNNSNPKDYCYSARIRSTVLQGLPFGG. Residues 41–65 traverse the membrane as a helical segment; it reads VPTVLALDFMCFLALLFLFSILRKV. Residue C51 is the site of S-palmitoyl cysteine attachment. The Cytoplasmic segment spans residues 66 to 145; the sequence is AWDYGRLALV…KDDEIRDKCG (80 aa). The Mediates endoplasmic reticulum retention motif lies at 86 to 88; that stretch reads RDR. Residues S111, S113, S114, and S115 each carry the phosphoserine modification. C126 carries the S-palmitoyl cysteine lipid modification. Residues 146 to 178 traverse the membrane as a helical segment; that stretch reads GDAVHYLSFQRHIIGLLVVVGVLSVGIVLPVNF. The Extracellular portion of the chain corresponds to 179-202; the sequence is SGDLLENNAYSFGRTTIANLKSGN. The helical transmembrane segment at 203 to 227 threads the bilayer; the sequence is NLLWLHTSFAFLYLLLTVYSMRRHT. At 228-427 the chain is on the cytoplasmic side; that stretch reads SKMRYKEDDL…IYWEHLSIRG (200 aa). The tract at residues 231 to 426 is intracellular linker IL2; confers mechanosensitivity; that stretch reads RYKEDDLVKR…NIYWEHLSIR (196 aa). Residues C382 and C398 are each lipidated (S-palmitoyl cysteine). A helical membrane pass occupies residues 428 to 457; it reads FIWWLRCLVINVVLFILLFFLTTPAIIITT. The Extracellular segment spans residues 458 to 472; it reads MDKFNVTKPVEYLNN. N-linked (GlcNAc...) asparagine glycosylation occurs at N462. The helical transmembrane segment at 473–502 threads the bilayer; that stretch reads PIITQFFPTLLLWCFSALLPTIVYYSAFFE. Residues 503–506 are Cytoplasmic-facing; sequence AHWT. Residues 507 to 543 form a helical membrane-spanning segment; it reads RSGENRTTMHKCYTFLIFMVLLLPSLGLSSLDLFFRW. At 544-566 the chain is on the extracellular side; that stretch reads LFDKKFLAEAAIRFECVFLPDNG. A helical membrane pass occupies residues 567 to 599; it reads AFFVNYVIASAFIGNAMDLLRIPGLLMYMIRLC. Positions 567-599 are gating helix; it reads AFFVNYVIASAFIGNAMDLLRIPGLLMYMIRLC. The Cytoplasmic segment spans residues 600–619; sequence LARSAAERRNVKRHQAYEFQ. A helical membrane pass occupies residues 620 to 638; it reads FGAAYAWMMCVFTVVMTYS. Residues 639 to 641 are Extracellular-facing; the sequence is ITC. Residues 642-666 form a helical membrane-spanning segment; that stretch reads PIIVPFGLMYMLLKHLVDRYNLYYA. At 667–673 the chain is on the cytoplasmic side; it reads YLPAKLD. Residues 674 to 702 traverse the membrane as a helical segment; sequence KKIHSGAVNQVVAAPILCLFWLLFFSTMR. Residues 703 to 707 are Extracellular-facing; that stretch reads TGFLA. Residues 708–728 traverse the membrane as a helical segment; it reads PTSMFTFVVLVITIVICLCHV. Residues C726 and C729 are each lipidated (S-palmitoyl cysteine). Residues 729 to 832 are Cytoplasmic-facing; that stretch reads CFGHFKYLSA…DSLIENEIHQ (104 aa). The tract at residues 780–814 is disordered; the sequence is EVDGDGDGAPGSSGDEPPSSSSQDEELLMPPDALT. The span at 789-801 shows a compositional bias: low complexity; that stretch reads PGSSGDEPPSSSS.

The protein belongs to the CSC1 (TC 1.A.17) family. Monomer. Interacts with SLC19A2; interaction is required for the phospholipid scramblase activity. Post-translationally, palmitoylation is required for localization to the plasma membrane and stability. In terms of processing, N-Glycosylated.

It is found in the cell membrane. It localises to the endoplasmic reticulum membrane. Its subcellular location is the lysosome membrane. The protein resides in the early endosome membrane. The enzyme catalyses Ca(2+)(in) = Ca(2+)(out). The catalysed reaction is Mg(2+)(in) = Mg(2+)(out). It carries out the reaction K(+)(in) = K(+)(out). It catalyses the reaction Na(+)(in) = Na(+)(out). The enzyme catalyses Cs(+)(in) = Cs(+)(out). The catalysed reaction is a 1,2-diacyl-sn-glycero-3-phosphocholine(in) = a 1,2-diacyl-sn-glycero-3-phosphocholine(out). It carries out the reaction a sphingomyelin(in) = a sphingomyelin(out). Functionally, mechanosensitive cation channel with low conductance and high activation threshold. Osmosensitive cation channel preferentially activated by hypotonic stress. Also acts as a phospholipid scramblase in response to changes in membrane structure: upon changes in membrane curvature and thickness, alters its conformation and translocates phospholipids, such as phosphatidylcholine and sphingomyelin, thereby controlling plasma membrane lipid distribution. Forms a heterodimer with SLC19A2, which mediates phospholipid scramblase activity following Ca(2+) stimulation. Expressed in excitatory neurons of the subfornical organ and functions as a thirst receptor that mediates neuronal response to hyperosmolality to drive thirst and drinking behavior. Facilitates intestinal motility by promoting proliferation of intestinal stem cells. Essential for the baby's first breath and respiration throughout life. Upon lung inflation conducts cation currents in alveolar type 1 and 2 cells triggering lamellar body exocytosis and surfactant secretion into airspace. Acts as an osmosensor in cochlear outer hair cells (OHCs) where it mediates calcium influx and regulatory volume decrease response. Required for the maintenance of OHC morphology, OHC survival and normal hearing. The sequence is that of Mechanosensitive cation channel TMEM63B from Homo sapiens (Human).